We begin with the raw amino-acid sequence, 433 residues long: Mitochondrial inner membrane magnesium transporter MIT1 (433 aa).

A coiled-coil region spans residues 257–298; sequence TNKLLRDMMKIKNNLQKLSNLLNALRTNIEKILNNENDMKNM. Residues 360–380 form a helical membrane-spanning segment; it reads FILLNAKISFSTLLFSISSVV. The Extracellular segment spans residues 381–396; that stretch reads TSLFGMNLKNFVEDSN. The helical transmembrane segment at 397–417 threads the bilayer; sequence YAFIIVSIFVSVWSIIGIYVT. The Mitochondrial matrix portion of the chain corresponds to 418-433; sequence KNINTLLKFFDRYNFR.

The protein belongs to the CorA metal ion transporter (MIT) (TC 1.A.35) family.

It is found in the mitochondrion inner membrane. Its function is as follows. Mitochondrial inner membrane magnesium transporter required for mitochondrial magnesium homeostasis. Involved in the development of the sporozoite in the mosquito vector midgut. In Plasmodium berghei (strain Anka), this protein is Mitochondrial inner membrane magnesium transporter MIT1.